The sequence spans 179 residues: X-linked lymphocyte-regulated protein 5C (179 aa).

Residues 1-11 (MSNKEQKDMKK) show a composition bias toward basic and acidic residues. A disordered region spans residues 1–75 (MSNKEQKDMK…MQDFKGDDGT (75 aa)). The span at 42-53 (GTSGMGSHSSGS) shows a compositional bias: low complexity. The segment covering 56-75 (QEAREPVQKKMQDFKGDDGT) has biased composition (basic and acidic residues). The stretch at 146–175 (ITQQQMKILQTAIEDHETKLKNAKDMCDTF) forms a coiled coil.

This sequence belongs to the XLR/SYCP3 family. As to expression, expressed in testis (at protein level). Also expressed in ovary. Not detected in other tissues tested.

It is found in the nucleus. The protein resides in the chromosome. This is X-linked lymphocyte-regulated protein 5C from Mus musculus (Mouse).